The following is a 218-amino-acid chain: Recombination protein RecR (218 aa).

The C4-type zinc-finger motif lies at 56 to 71; the sequence is CRICCNISREEVCRIC. Residues 79 to 195 enclose the Toprim domain; the sequence is GTICVVEEPK…VVSRLASGMP (117 aa).

This sequence belongs to the RecR family.

May play a role in DNA repair. It seems to be involved in an RecBC-independent recombinational process of DNA repair. It may act with RecF and RecO. This chain is Recombination protein RecR, found in Corynebacterium glutamicum (strain R).